Reading from the N-terminus, the 108-residue chain is MSKDTASQPSLTKLIGLDIFGVGRLHAILLICIFLSAIGVVLATHNTRQMTVQRENLLLEKDILDGEWRNLILEESALAEHSRVQARSVRELDMERPAPDKEVIIKLR.

The Cytoplasmic segment spans residues 1 to 24 (MSKDTASQPSLTKLIGLDIFGVGR). The chain crosses the membrane as a helical span at residues 25 to 45 (LHAILLICIFLSAIGVVLATH). Topologically, residues 46 to 108 (NTRQMTVQRE…PDKEVIIKLR (63 aa)) are periplasmic.

The protein belongs to the FtsL family. In terms of assembly, part of a complex composed of FtsB, FtsL and FtsQ.

It localises to the cell inner membrane. Essential cell division protein. May link together the upstream cell division proteins, which are predominantly cytoplasmic, with the downstream cell division proteins, which are predominantly periplasmic. In Aliivibrio fischeri (strain ATCC 700601 / ES114) (Vibrio fischeri), this protein is Cell division protein FtsL.